The following is a 319-amino-acid chain: GTPase Era (319 aa).

The Era-type G domain occupies 9 to 196 (RSGVSLIIGR…MRTLRDLLPE (188 aa)). Residues 17–24 (GRPSSGKS) are G1. A GTP-binding site is contributed by 17 to 24 (GRPSSGKS). Residues 43–47 (QTTRN) are G2. Residues 64–67 (DTPG) are G3. Residues 64-68 (DTPGY) and 127-130 (NKVD) each bind GTP. Residues 127-130 (NKVD) are G4. Residues 175–177 (ISA) are G5. One can recognise a KH type-2 domain in the interval 227–303 (CRDELPHALY…HISLDIRVKV (77 aa)).

The protein belongs to the TRAFAC class TrmE-Era-EngA-EngB-Septin-like GTPase superfamily. Era GTPase family. Monomer.

The protein localises to the cytoplasm. It localises to the cell inner membrane. Functionally, an essential GTPase that binds both GDP and GTP, with rapid nucleotide exchange. Plays a role in 16S rRNA processing and 30S ribosomal subunit biogenesis and possibly also in cell cycle regulation and energy metabolism. The sequence is that of GTPase Era from Treponema pallidum (strain Nichols).